A 1246-amino-acid chain; its full sequence is Respiratory nitrate reductase 2 alpha chain (1246 aa).

Positions 43–107 (DKIVRSTHGV…SYSWYLYSAN (65 aa)) constitute a 4Fe-4S Mo/W bis-MGD-type domain. The [4Fe-4S] cluster site is built by H50, C54, C58, and C93. D223 provides a ligand contact to Mo-bis(molybdopterin guanine dinucleotide).

Belongs to the prokaryotic molybdopterin-containing oxidoreductase family. Tetramer composed of an alpha, a beta and 2 gamma chains. Alpha and beta are catalytic chains; gamma chain is involved in binding the enzyme complex to the cytoplasmic membrane. The cofactor is [4Fe-4S] cluster. Mo-bis(molybdopterin guanine dinucleotide) serves as cofactor.

Its subcellular location is the cell membrane. The catalysed reaction is nitrate + a quinol = a quinone + nitrite + H2O. This is a second nitrate reductase enzyme which can substitute for the NRA enzyme and allows E.coli to use nitrate as an electron acceptor during anaerobic growth. Its function is as follows. The alpha chain is the actual site of nitrate reduction. The sequence is that of Respiratory nitrate reductase 2 alpha chain (narZ) from Escherichia coli (strain K12).